The following is a 365-amino-acid chain: Zinc finger MYND domain-containing protein 12 (365 aa).

Zn(2+)-binding residues include Cys17, Cys20, Cys28, Cys31, Cys37, His41, His50, and Cys54. The segment at 17-54 adopts an MYND-type; atypical zinc-finger fold; that stretch reads CEVCEAPAERVCAACTVTYYCGVVHQKADWDSIHEKIC. TPR repeat units lie at residues 172 to 205 and 214 to 247; these read SLLHRNLGLLYIAKKNYEEARYHLANDIYFASCA and SGGYFHLANIFYDLKKLDLADTLYTKVSEIWHAY.

Expressed predominantly in the testis.

The protein resides in the cell projection. Its subcellular location is the cilium. It localises to the flagellum. Required for sperm flagellum function and male fertility. The chain is Zinc finger MYND domain-containing protein 12 (ZMYND12) from Homo sapiens (Human).